Reading from the N-terminus, the 75-residue chain is Calhepatin (75 aa).

Ser1 is subject to N-acetylserine. EF-hand domains follow at residues 2 to 37 (ADEQ…VHPK) and 38 to 73 (VSRN…LADL). Residues Asp15, Asp17, Ser19, Thr21, Glu26, Asp51, Asn53, Asp55, Gln57, and Glu62 each contribute to the Ca(2+) site.

As to quaternary structure, monomer and homodimer. As to expression, liver, and to a much lower level intestine.

Its function is as follows. Binds both calcium and copper, but not zinc. May be involved in calcium signal transduction. The polypeptide is Calhepatin (Lepidosiren paradoxus (South American lungfish)).